A 248-amino-acid chain; its full sequence is uncharacterized protein (248 aa).

This is an uncharacterized protein from Ostreid herpesvirus 1 (isolate France) (OsHV-1).